Consider the following 72-residue polypeptide: Translation initiation factor IF-1 (72 aa).

The region spanning 1 to 72 (MAKDDVIEVE…TRGRITYRYK (72 aa)) is the S1-like domain. Phosphotyrosine is present on Tyr60.

This sequence belongs to the IF-1 family. Component of the 30S ribosomal translation pre-initiation complex which assembles on the 30S ribosome in the order IF-2 and IF-3, IF-1 and N-formylmethionyl-tRNA(fMet); mRNA recruitment can occur at any time during PIC assembly.

The protein localises to the cytoplasm. In terms of biological role, one of the essential components for the initiation of protein synthesis. Stabilizes the binding of IF-2 and IF-3 on the 30S subunit to which N-formylmethionyl-tRNA(fMet) subsequently binds. Helps modulate mRNA selection, yielding the 30S pre-initiation complex (PIC). Upon addition of the 50S ribosomal subunit IF-1, IF-2 and IF-3 are released leaving the mature 70S translation initiation complex. The chain is Translation initiation factor IF-1 from Geobacillus kaustophilus (strain HTA426).